Consider the following 134-residue polypeptide: Small ribosomal subunit protein uS11 (134 aa).

This sequence belongs to the universal ribosomal protein uS11 family. As to quaternary structure, part of the 30S ribosomal subunit. Interacts with proteins S7 and S18. Binds to IF-3.

Functionally, located on the platform of the 30S subunit, it bridges several disparate RNA helices of the 16S rRNA. Forms part of the Shine-Dalgarno cleft in the 70S ribosome. This Delftia acidovorans (strain DSM 14801 / SPH-1) protein is Small ribosomal subunit protein uS11.